The chain runs to 52 residues: Sperm protamine P1 (52 aa).

This sequence belongs to the protamine P1 family. In terms of assembly, cross-linked by interchain disulfide bonds around the DNA-helix. Testis.

Its subcellular location is the nucleus. The protein localises to the chromosome. In terms of biological role, protamines substitute for histones in the chromatin of sperm during the haploid phase of spermatogenesis. They compact sperm DNA into a highly condensed, stable and inactive complex. In Alouatta seniculus (Red howler monkey), this protein is Sperm protamine P1 (PRM1).